Consider the following 331-residue polypeptide: Glyceraldehyde-3-phosphate dehydrogenase, cytosolic (331 aa).

NAD(+) contacts are provided by residues 12-13, aspartate 34, and arginine 78; that span reads RI. D-glyceraldehyde 3-phosphate-binding positions include 149–151, threonine 180, 209–210, and arginine 232; these read SCT and TG. Cysteine 150 serves as the catalytic Nucleophile. Asparagine 314 contacts NAD(+).

It belongs to the glyceraldehyde-3-phosphate dehydrogenase family. As to quaternary structure, homotetramer.

It localises to the cytoplasm. It catalyses the reaction D-glyceraldehyde 3-phosphate + phosphate + NAD(+) = (2R)-3-phospho-glyceroyl phosphate + NADH + H(+). It participates in carbohydrate degradation; glycolysis; pyruvate from D-glyceraldehyde 3-phosphate: step 1/5. The sequence is that of Glyceraldehyde-3-phosphate dehydrogenase, cytosolic from Trypanosoma brucei brucei.